The following is a 36-amino-acid chain: EGECGGFWWKCGSGKPACCPKYVCSPKWGLCNFPMP.

3 disulfide bridges follow: Cys4/Cys19, Cys11/Cys24, and Cys18/Cys31.

It belongs to the neurotoxin 10 (Hwtx-1) family. 44 (Jztx-4) subfamily. As to expression, expressed by the venom gland.

The protein resides in the secreted. Functionally, gating modifier of Kv2.1/KCNB1 (IC(50)=5.1 nM), Kv2.2/KCNB2 and Kv4.3/KCND3 channels (IC(50)=39 nM). Acts by shifting the channel activation to more depolarized potentials by stabilizing the resting conformation of the voltage sensor. It completely inhibits opening of the Kv2.1/KCNB1 channel at negative membrane voltages and dramatically shifts channel activation to positive voltages. May act by partitioning into lipid membranes and then by binding the voltage sensor paddle of the channel from a place within the membrane. This Chilobrachys guangxiensis (Chinese earth tiger tarantula) protein is Kappa-theraphotoxin-Pg1a.